Here is a 369-residue protein sequence, read N- to C-terminus: Anhydro-N-acetylmuramic acid kinase (369 aa).

An ATP-binding site is contributed by Gly-12–Asp-19.

This sequence belongs to the anhydro-N-acetylmuramic acid kinase family.

It carries out the reaction 1,6-anhydro-N-acetyl-beta-muramate + ATP + H2O = N-acetyl-D-muramate 6-phosphate + ADP + H(+). The protein operates within amino-sugar metabolism; 1,6-anhydro-N-acetylmuramate degradation. It participates in cell wall biogenesis; peptidoglycan recycling. In terms of biological role, catalyzes the specific phosphorylation of 1,6-anhydro-N-acetylmuramic acid (anhMurNAc) with the simultaneous cleavage of the 1,6-anhydro ring, generating MurNAc-6-P. Is required for the utilization of anhMurNAc either imported from the medium or derived from its own cell wall murein, and thus plays a role in cell wall recycling. The sequence is that of Anhydro-N-acetylmuramic acid kinase from Shewanella pealeana (strain ATCC 700345 / ANG-SQ1).